We begin with the raw amino-acid sequence, 668 residues long: Ubiquitin ligase complex F-box protein UFO1 (668 aa).

One can recognise an F-box domain in the interval 5 to 51; that stretch reads GLVLQDLPPEILINIFSHLDEKDLFTLQELSTHFRNLIHDEELWKNL. Serine 511 bears the Phosphoserine mark. Threonine 514 carries the post-translational modification Phosphothreonine. 3 UIM domains span residues 547-566, 583-602, and 651-668; these read DEDEQLRRALEESQLIYETQ, EDDEEFLRAIRQSRVEDERR, and NVDEDLQLAIALSLSEIN. Positions 564 to 578 are enriched in polar residues; sequence ETQTNSSANHGNNTN. 2 disordered regions span residues 564–585 and 599–639; these read ETQTNSSANHGNNTNDEIDEDD and DERR…TENT.

In terms of assembly, interacts with SKP1. Component of the probable SCF(UFO1) complex containing CDC53, SKP1, RBX1 and UFO1.

It functions in the pathway protein modification; protein ubiquitination. Functionally, substrate recognition component of a SCF (SKP1-CUL1-F-box protein) E3 ubiquitin-protein ligase complex which mediates the ubiquitination and subsequent proteasomal degradation of target proteins. Probably recognizes and binds to phosphorylated target proteins. This Saccharomyces cerevisiae (strain ATCC 204508 / S288c) (Baker's yeast) protein is Ubiquitin ligase complex F-box protein UFO1 (UFO1).